Here is a 468-residue protein sequence, read N- to C-terminus: 6-phosphogluconate dehydrogenase, decarboxylating (468 aa).

Residues 10-15 (GMAVMG), 33-35 (NRS), 74-76 (VKA), and N102 each bind NADP(+). Residues N102 and 128-130 (SGG) contribute to the substrate site. The active-site Proton acceptor is K183. 186 to 187 (HN) serves as a coordination point for substrate. Catalysis depends on E190, which acts as the Proton donor. 5 residues coordinate substrate: Y191, K260, R287, R445, and H451.

This sequence belongs to the 6-phosphogluconate dehydrogenase family. In terms of assembly, homodimer.

The enzyme catalyses 6-phospho-D-gluconate + NADP(+) = D-ribulose 5-phosphate + CO2 + NADPH. The protein operates within carbohydrate degradation; pentose phosphate pathway; D-ribulose 5-phosphate from D-glucose 6-phosphate (oxidative stage): step 3/3. In terms of biological role, catalyzes the oxidative decarboxylation of 6-phosphogluconate to ribulose 5-phosphate and CO(2), with concomitant reduction of NADP to NADPH. The sequence is that of 6-phosphogluconate dehydrogenase, decarboxylating (gnd) from Escherichia coli (strain K12).